The chain runs to 132 residues: Subtelomeric hrmA-associated cluster protein AFUB_079000 (132 aa).

Part of the subtelomeric hrmA-associated cluster (HAC) containing genes that alter the hyphal surface (such as reduced total chitin or increased beta-glucan exposure) and perturb inter-hyphal interactions within the developing biofilms, resulting in a loss of vertically aligned polarized growing filaments. Consequently, this hypoxia-typic morphotype (called H-MORPH) with altered biofilm architecture leads to increased hypoxia fitness, increased host inflammation, rapid disease progression, and mortality in a murine model of invasive aspergillosis. The protein is Subtelomeric hrmA-associated cluster protein AFUB_079000 of Aspergillus fumigatus (strain CBS 144.89 / FGSC A1163 / CEA10) (Neosartorya fumigata).